A 336-amino-acid polypeptide reads, in one-letter code: Alpha-N-acetylgalactosaminide alpha-2,6-sialyltransferase 5 (336 aa).

Residues 1–8 (MKTLMRHG) are Cytoplasmic-facing. A helical; Signal-anchor for type II membrane protein transmembrane segment spans residues 9 to 29 (LAVCLVLTTMCTSLLLVYSSL). Residues 30–336 (GSQKERPPQQ…VNHAEGKPVF (307 aa)) lie on the Lumenal side of the membrane. The interval 34–76 (ERPPQQQQQQQQQQQQAATATGSTQLVESSPQPRRTAPAGPRQ) is disordered. Residues 38-49 (QQQQQQQQQQQQ) show a composition bias toward low complexity. Residues 50-66 (AATATGSTQLVESSPQP) show a composition bias toward polar residues. C96 and C245 are oxidised to a cystine. N137 and N161 each carry an N-linked (GlcNAc...) asparagine glycan.

Belongs to the glycosyltransferase 29 family. As to expression, high expression in forebrain and to a lesser extent in cerebellum. No expression in salivary gland, intestine, liver, kidney, heart, lung, thymus and spleen.

The protein resides in the golgi apparatus membrane. The enzyme catalyses a ganglioside GM1b (d18:1(4E)) + CMP-N-acetyl-beta-neuraminate = a ganglioside GD1alpha (d18:1(4E)) + CMP + H(+). The catalysed reaction is N-acetyl-alpha-neuraminosyl-(2-&gt;3)-beta-D-galactosyl-(1-&gt;3)-N-acetyl-beta-D-glucosaminyl-(1-&gt;3)-beta-D-galactosyl-(1-&gt;4)-beta-D-glucosyl-(1&lt;-&gt;1')-N-acyl-sphing-4-enine + CMP-N-acetyl-beta-neuraminate = N-acetyl-alpha-neuraminosyl-(2-&gt;3)-beta-D-galactosyl-(1-&gt;3)-[N-acetyl-alpha-neuraminosyl-(2-&gt;6)]-N-acetyl-beta-D-glucosaminyl-(1-&gt;3)-beta-D-galactosyl-(1-&gt;4)-beta-D-glucosyl-(1&lt;-&gt;1')-N-acyl-sphing-4-enine + CMP + H(+). The protein operates within glycolipid biosynthesis. In terms of biological role, predominantly catalyzes the biosynthesis of ganglioside GD1alpha from GM1b in the brain, by transferring the sialyl group (N-acetyl-alpha-neuraminyl or NeuAc) from CMP-NeuAc to the GalNAc residue on the NeuAc-alpha-2,3-Gal-beta-1,3-GalNAc sequence of GM1b. GD1alpha is a critical molecule in the communication and interaction between neuronal cells and their supportive cells, particularly in brain tissues, and functions as an adhesion molecule in the process of metastasis. Also shows activity towards sialyl Lc4Cer (N-acetyl-alpha-neuraminosyl-(2-&gt;3)-beta-D-galactosyl-(1-&gt;3)-N-acetyl-beta-D-glucosaminyl-(1-&gt;3)-beta-D-galactosyl-(1-&gt;4)-beta-D-glucosyl-(1&lt;-&gt;1')-N-acyl-sphing-4-enine) generating disialyl Lc4Cer, which can lead to the synthesis of disialyl Lewis a (Le(a)), suggested to be a cancer-associated antigen. This is Alpha-N-acetylgalactosaminide alpha-2,6-sialyltransferase 5 (St6galnac5) from Mus musculus (Mouse).